The chain runs to 446 residues: N-succinylarginine dihydrolase (446 aa).

Substrate is bound by residues 21-30 (AGLSWGNVAS), N112, and 139-140 (HR). Residue E176 is part of the active site. A substrate-binding site is contributed by R216. H252 is a catalytic residue. The substrate site is built by D254 and N364. C370 acts as the Nucleophile in catalysis.

The protein belongs to the succinylarginine dihydrolase family. In terms of assembly, homodimer.

The catalysed reaction is N(2)-succinyl-L-arginine + 2 H2O + 2 H(+) = N(2)-succinyl-L-ornithine + 2 NH4(+) + CO2. It participates in amino-acid degradation; L-arginine degradation via AST pathway; L-glutamate and succinate from L-arginine: step 2/5. Functionally, catalyzes the hydrolysis of N(2)-succinylarginine into N(2)-succinylornithine, ammonia and CO(2). The protein is N-succinylarginine dihydrolase of Marinobacter nauticus (strain ATCC 700491 / DSM 11845 / VT8) (Marinobacter aquaeolei).